We begin with the raw amino-acid sequence, 164 residues long: Leucine-rich single-pass membrane protein 2 (164 aa).

Residues 97 to 117 (GFLLLLALLVLTCLVLALLAV) traverse the membrane as a helical segment.

It is found in the membrane. The polypeptide is Leucine-rich single-pass membrane protein 2 (LSMEM2) (Homo sapiens (Human)).